The chain runs to 192 residues: Small ribosomal subunit protein uS5 (192 aa).

One can recognise an S5 DRBM domain in the interval leucine 22–valine 85.

Belongs to the universal ribosomal protein uS5 family. As to quaternary structure, part of the 30S ribosomal subunit. Contacts proteins S4 and S8.

Functionally, with S4 and S12 plays an important role in translational accuracy. Located at the back of the 30S subunit body where it stabilizes the conformation of the head with respect to the body. The protein is Small ribosomal subunit protein uS5 of Gluconacetobacter diazotrophicus (strain ATCC 49037 / DSM 5601 / CCUG 37298 / CIP 103539 / LMG 7603 / PAl5).